Reading from the N-terminus, the 1070-residue chain is DNA-directed RNA polymerase subunit beta (1070 aa).

Belongs to the RNA polymerase beta chain family. In terms of assembly, in plastids the minimal PEP RNA polymerase catalytic core is composed of four subunits: alpha, beta, beta', and beta''. When a (nuclear-encoded) sigma factor is associated with the core the holoenzyme is formed, which can initiate transcription.

Its subcellular location is the plastid. It is found in the chloroplast. The catalysed reaction is RNA(n) + a ribonucleoside 5'-triphosphate = RNA(n+1) + diphosphate. Functionally, DNA-dependent RNA polymerase catalyzes the transcription of DNA into RNA using the four ribonucleoside triphosphates as substrates. In Vitis vinifera (Grape), this protein is DNA-directed RNA polymerase subunit beta.